The following is a 396-amino-acid chain: Deoxyguanosinetriphosphate triphosphohydrolase-like protein (396 aa).

One can recognise an HD domain in the interval 69–211 (RLSHSLEVSQ…AALADDIAYN (143 aa)).

It belongs to the dGTPase family. Type 2 subfamily.

The polypeptide is Deoxyguanosinetriphosphate triphosphohydrolase-like protein (Parvibaculum lavamentivorans (strain DS-1 / DSM 13023 / NCIMB 13966)).